The sequence spans 286 residues: Phosphatidylserine decarboxylase proenzyme (286 aa).

Residues Asp90, His147, and Ser250 each act as charge relay system; for autoendoproteolytic cleavage activity in the active site. Residue Ser250 is the Schiff-base intermediate with substrate; via pyruvic acid; for decarboxylase activity of the active site. Residue Ser250 is modified to Pyruvic acid (Ser); by autocatalysis.

The protein belongs to the phosphatidylserine decarboxylase family. PSD-B subfamily. Prokaryotic type I sub-subfamily. In terms of assembly, heterodimer of a large membrane-associated beta subunit and a small pyruvoyl-containing alpha subunit. Pyruvate serves as cofactor. Post-translationally, is synthesized initially as an inactive proenzyme. Formation of the active enzyme involves a self-maturation process in which the active site pyruvoyl group is generated from an internal serine residue via an autocatalytic post-translational modification. Two non-identical subunits are generated from the proenzyme in this reaction, and the pyruvate is formed at the N-terminus of the alpha chain, which is derived from the carboxyl end of the proenzyme. The autoendoproteolytic cleavage occurs by a canonical serine protease mechanism, in which the side chain hydroxyl group of the serine supplies its oxygen atom to form the C-terminus of the beta chain, while the remainder of the serine residue undergoes an oxidative deamination to produce ammonia and the pyruvoyl prosthetic group on the alpha chain. During this reaction, the Ser that is part of the protease active site of the proenzyme becomes the pyruvoyl prosthetic group, which constitutes an essential element of the active site of the mature decarboxylase.

It localises to the cell membrane. The catalysed reaction is a 1,2-diacyl-sn-glycero-3-phospho-L-serine + H(+) = a 1,2-diacyl-sn-glycero-3-phosphoethanolamine + CO2. It participates in phospholipid metabolism; phosphatidylethanolamine biosynthesis; phosphatidylethanolamine from CDP-diacylglycerol: step 2/2. Catalyzes the formation of phosphatidylethanolamine (PtdEtn) from phosphatidylserine (PtdSer). This is Phosphatidylserine decarboxylase proenzyme from Psychromonas ingrahamii (strain DSM 17664 / CCUG 51855 / 37).